Consider the following 1169-residue polypeptide: Rabankyrin-5 (1169 aa).

Alanine 2 is subject to N-acetylalanine. Positions 68–130 (SDLKIKVGDR…IYTDELEFRE (63 aa)) constitute a BTB domain. ANK repeat units lie at residues 217-247 (KTEY…QLPG), 255-284 (NGDL…DVDM), 288-317 (SGWS…FVNA), 322-362 (AQET…NPNM), and 366-396 (KGRT…DLEL). Serine 270 carries the phosphoserine modification. Residues 421–423 (NPF) carry the NPF motif. ANK repeat units lie at residues 490 to 519 (WGET…NPNL), 542 to 572 (HLQT…ALHA), 588 to 617 (RDQT…AIND), 621 to 650 (DGQT…DINV), 654 to 683 (DGET…DMSV), 687 to 716 (KGNP…DATC), 724 to 753 (CLQT…DVNS), 769 to 798 (DGQT…NVNA), 802 to 832 (EGRT…HLNV), 836 to 865 (QGLT…GAAE), 870 to 899 (KGRN…NVNS), 905 to 934 (SKLT…KVNE), 938 to 967 (HRQT…DFAA), 971 to 1001 (NGNN…DAEA), 1005 to 1037 (RGQS…GYPL), and 1043 to 1072 (DGST…RLGV). The tract at residues 650–759 (VRTQDGETAL…DVNSPRQPGA (110 aa)) is interaction with RHOD and RAB5A. An FYVE-type zinc finger spans residues 1104–1164 (WCDGSYCYEC…VCNICFDVLT (61 aa)). Residues cysteine 1110, cysteine 1113, cysteine 1126, cysteine 1129, cysteine 1134, cysteine 1137, cysteine 1156, and cysteine 1159 each coordinate Zn(2+).

In terms of assembly, interacts with RAB5A (in GTP-bound form). Interacts with RHOD (independent of GTP-loaded status). Interacts with EHD1. Interacts with VPS26A; the interaction is independent of EHD1 and is indicative for an association with the cargo recognition subcomplex of the retromer complex. High expression in whole adult brain and intermediate expression in all other tissues and specific brain regions examined, including fetal brain.

It is found in the cytoplasm. It localises to the endosome membrane. Its subcellular location is the early endosome. Functionally, proposed effector of Rab5. Binds to phosphatidylinositol 3-phosphate (PI(3)P). Involved in homotypic early endosome fusion and to a lesser extent in heterotypic fusion of chlathrin-coated vesicles with early endosomes. Involved in macropinocytosis; the function is dependent on Rab5-GTP. Required for correct endosomal localization. Involved in the internalization and trafficking of activated tyrosine kinase receptors such as PDGFRB. Regulates the subcellular localization of the retromer complex in a EHD1-dependent manner. Involved in endosome-to-Golgi transport and biosynthetic transport to late endosomes and lysosomes indicative for a regulation of retromer complex-mediated retrograde transport. The sequence is that of Rabankyrin-5 (ANKFY1) from Homo sapiens (Human).